We begin with the raw amino-acid sequence, 26 residues long: Mucus envelope protein (26 aa).

In terms of processing, glycosylated. Produced by the opercular gland in the gill cavity and secreted as part of the mucus cocoon.

Its subcellular location is the secreted. Exhibits antibacterial activity. May play a role in protection against parasite settlement. The protein is Mucus envelope protein of Scarus vetula (Queen parrotfish).